A 271-amino-acid chain; its full sequence is Urease accessory protein UreD (271 aa).

This sequence belongs to the UreD family. In terms of assembly, ureD, UreF and UreG form a complex that acts as a GTP-hydrolysis-dependent molecular chaperone, activating the urease apoprotein by helping to assemble the nickel containing metallocenter of UreC. The UreE protein probably delivers the nickel.

The protein resides in the cytoplasm. In terms of biological role, required for maturation of urease via the functional incorporation of the urease nickel metallocenter. The polypeptide is Urease accessory protein UreD (Haemophilus influenzae (strain PittGG)).